A 345-amino-acid polypeptide reads, in one-letter code: UPF0228 protein MA_2656 (345 aa).

This sequence belongs to the UPF0228 family.

This chain is UPF0228 protein MA_2656, found in Methanosarcina acetivorans (strain ATCC 35395 / DSM 2834 / JCM 12185 / C2A).